The chain runs to 452 residues: LIM/homeobox protein lim-7 (452 aa).

LIM zinc-binding domains lie at 54-116 (AVCA…LFTT) and 117-179 (RCSR…LDNP). The disordered stretch occupies residues 184 to 268 (SVPDYSKLNN…KKKDKQATRV (85 aa)). 2 stretches are compositionally biased toward low complexity: residues 192-205 (NNNN…SSSN) and 217-227 (TLTSLDNNTSS). The homeobox DNA-binding region spans 265 to 324 (ATRVRTVLNENQLKILRDCYSINSRPDATLKERLVEMTGLSARVIRVWFQNKRCKDKKRQ). The interval 347-376 (GIGPLMVQPATPHIDNTLGGPIDIQHFAQW) is LIM interaction domain (LID).

Interacts (via LID domain) with ceh-14 (via LIM zinc-binding domains 1 and 2). Expressed in gonadal sheath cells, URA motoneurons, and 10 additional cells near the isthmus and terminal bulb of the pharynx. Expressed in the ALA and BDU cells.

Its subcellular location is the nucleus. Functionally, probable DNA-binding transcriptional activator. The polypeptide is LIM/homeobox protein lim-7 (Caenorhabditis elegans).